A 520-amino-acid polypeptide reads, in one-letter code: MSKFDTSALEAFVRHIPQNYKGPGGVVAVVKDGEVVLQHAWGFADLRTRTPMTLDTRMPICSVSKQFTCAVLLDAVGEPELLDDALEAYLDKFEDERPAVRDLCNNQSGLRDYWALSVLCGADPEGVFLPAQAQSLLRRLKTTHFEPGSHYSYCNGNFRILADLIEAHTGRTLVDILSERIFAPAGMKRAELISDTALFDECTGYEGDTVRGFLPATNRIQWMGDAGICASLNDMIAWEQFIDATRDDESGLYRRLSGPQTFKDGVAAPYGFGLNLHETGGKRLTGHGGALRGWRCQRWHCADERLSTIAMFNFEGGASEVAFKLMNIALGVSSSEVSRVEADSAWFGSWLDDETGLVLSLEDAGHGRMKARFGTSPEMMDVVSANEARSAVTTIRRDGETIELVRASENLRLSMKRVKGEAKHDIIGRYHSDELDADLLLVSEGGAIYGAFEGFLGKSDMYPLYSVGSDVWLLPVQRSMDAPSPGEWKLVFRRDDKGEITGLSVGCWLARGVEYRRVQP.

Ser-62 serves as the catalytic Nucleophile. Lys-65 (proton donor/acceptor) is an active-site residue. The interval 477-487 (QRSMDAPSPGE) is important for specificity. Asp-481 contributes to the substrate binding site.

It belongs to the peptidase S12 family. As to quaternary structure, homodimer.

It carries out the reaction Release of an N-terminal D-amino acid from a peptide, Xaa-|-Yaa-, in which Xaa is preferably D-Ala, D-Ser or D-Thr. D-amino acid amides and methyl esters also are hydrolyzed, as is glycine amide.. Inhibited by beta-lactam compounds such as 6-aminopenicillic acid, 7-aminocephalosporanic acid, benzylpenicillin and ampicillin. Inhibited by p-chloromercuribenzoate. Functionally, hydrolyzes N-terminal residues in D-amino acid-containing peptides. The polypeptide is D-aminopeptidase (dap) (Brucella anthropi (Ochrobactrum anthropi)).